A 114-amino-acid chain; its full sequence is rRNA-processing protein cgrA (114 aa).

The segment covering 1 to 11 (MSSAIPTSSVN) has biased composition (polar residues). The disordered stretch occupies residues 1–114 (MSSAIPTSSV…REKRNKLLHS (114 aa)). Residues 39–93 (YEKRLEARKRQEAVKEHERELREEKEAERKAQIQKIKDRRAAKEEKERYEKMAEK) are compositionally biased toward basic and acidic residues. Residues 40–101 (EKRLEARKRQ…EKMHRKRVER (62 aa)) are a coiled coil. Residues 94-114 (MHRKRVERLKRREKRNKLLHS) are compositionally biased toward basic residues.

Belongs to the CGR1 family.

It is found in the nucleus. Its subcellular location is the nucleolus. Involved in nucleolar integrity and required for processing of the pre-rRNA for the 60S ribosome subunit. This is rRNA-processing protein cgrA (cgrA) from Aspergillus fumigatus (strain ATCC MYA-4609 / CBS 101355 / FGSC A1100 / Af293) (Neosartorya fumigata).